The primary structure comprises 327 residues: Arabinose 5-phosphate isomerase KdsD (327 aa).

Residues 41-183 (ILENNRDKSR…AIALLKAKNF (143 aa)) enclose the SIS domain. Substrate contacts are provided by residues 74 to 75 (GT), His81, His87, 113 to 122 (GLLPMIKHLD), 147 to 149 (HVD), Thr221, and Glu273. Residue His81 coordinates Zn(2+). The region spanning 209 to 268 (MRKGNEIPIVKPTDNIRKAILEISDKGVGNTLVAENNTLLGIFTDGDLRRMFEAESFNSQ) is the CBS 1 domain. In terms of domain architecture, CBS 2 spans 275 to 327 (MTKNPKSISKEEMAITALEKMEKYEITSLAVVDNGHNILGIVTMHDLIKLELR).

It belongs to the SIS family. GutQ/KpsF subfamily. As to quaternary structure, homotetramer.

It catalyses the reaction D-arabinose 5-phosphate = D-ribulose 5-phosphate. The protein operates within carbohydrate biosynthesis; 3-deoxy-D-manno-octulosonate biosynthesis; 3-deoxy-D-manno-octulosonate from D-ribulose 5-phosphate: step 1/3. It participates in bacterial outer membrane biogenesis; lipopolysaccharide biosynthesis. With respect to regulation, inhibited by hydroxamates, mimicking the putative enediol reaction intermediate. Most potent inhibition, with an IC(50) of 0.7 uM, is obtained with the 4 carbon-based hydroxamate containing acetyl moieties. Functionally, involved in the biosynthesis of 3-deoxy-D-manno-octulosonate (KDO), a unique 8-carbon sugar component of lipopolysaccharides (LPSs). Catalyzes the reversible aldol-ketol isomerization between D-ribulose 5-phosphate (Ru5P) and D-arabinose 5-phosphate (A5P). This Francisella tularensis subsp. tularensis (strain SCHU S4 / Schu 4) protein is Arabinose 5-phosphate isomerase KdsD (kdsD).